A 1621-amino-acid polypeptide reads, in one-letter code: Lysophospholipase NTE1 (1621 aa).

Residues 1-12 are Cytoplasmic-facing; it reads MSSIPTPPDANG. The chain crosses the membrane as a helical span at residues 13-33; that stretch reads NPLIALAVAVIYAILYVLQGV. At 34–59 the chain is on the lumenal side; that stretch reads KYGVSLLTIGIPSCIVRMLQYSLTIS. A helical transmembrane segment spans residues 60-80; sequence LGFPHLLALFAGALLALFFLI. At 81–1621 the chain is on the cytoplasmic side; it reads RYRYLTRYAQ…RGNRLRRMSI (1541 aa). Disordered regions lie at residues 188-209, 250-379, 545-566, 648-667, 711-735, 772-791, and 839-870; these read PDAS…TRPS, EGEE…SVPR, QTAT…LDET, WNLN…QRDD, VSAL…GSTR, DDEA…GASG, and FRST…ERPF. Composition is skewed to low complexity over residues 195 to 209 and 348 to 361; these read TPTP…TRPS and RRSQ…RLNS. A nucleoside 3',5'-cyclic phosphate-binding positions include 788–907 and 951–1070; these read GASG…GYLS and RLLS…IAGR. Polar residues predominate over residues 839–867; sequence FRSTSSNQENPNSTPGSKHRQSSFGSSNE. One can recognise a PNPLA domain in the interval 1316–1480; it reads LVLGGGGARG…MDNTPIQPLR (165 aa). The short motif at 1320–1325 is the GXGXXG element; sequence GGGARG. The short motif at 1347–1351 is the GXSXG element; it reads GCSIG. The Nucleophile role is filled by serine 1349. The active-site Proton acceptor is aspartate 1467. The short motif at 1467–1469 is the DGA/G element; sequence DGG.

It belongs to the NTE family.

It is found in the endoplasmic reticulum membrane. It catalyses the reaction a 1-acyl-sn-glycero-3-phosphocholine + H2O = sn-glycerol 3-phosphocholine + a fatty acid + H(+). With respect to regulation, inhibited by organophosphorus esters. Its function is as follows. Intracellular phospholipase B that catalyzes the double deacylation of phosphatidylcholine (PC) to glycerophosphocholine (GroPCho). Plays an important role in membrane lipid homeostasis. Responsible for the rapid PC turnover in response to inositol, elevated temperatures, or when choline is present in the growth medium. The protein is Lysophospholipase NTE1 (NTE1) of Cryptococcus neoformans var. neoformans serotype D (strain B-3501A) (Filobasidiella neoformans).